The primary structure comprises 112 residues: Large ribosomal subunit protein P1 (112 aa).

Low complexity predominate over residues 71-90; it reads PAQAAAAAPAGGAPAAAAPA. The disordered stretch occupies residues 71–112; it reads PAQAAAAAPAGGAPAAAAPAESKEGRRSQGESDDDMGFGLLD. Residues 91 to 100 are compositionally biased toward basic and acidic residues; it reads ESKEGRRSQG.

Belongs to the eukaryotic ribosomal protein P1/P2 family. In terms of assembly, P1 and P2 exist as dimers at the large ribosomal subunit.

Its function is as follows. Plays an important role in the elongation step of protein synthesis. The polypeptide is Large ribosomal subunit protein P1 (rpl-21) (Oscheius tipulae).